A 308-amino-acid polypeptide reads, in one-letter code: Probable inositol oxygenase (308 aa).

Residues arginine 49 and 106–108 contribute to the substrate site; that span reads DDS. Fe cation-binding residues include histidine 119, histidine 144, and aspartate 145. Residues lysine 148 and 165–166 contribute to the substrate site; that span reads GD. Fe cation contacts are provided by histidine 217, histidine 243, and aspartate 276. Residue 243 to 244 coordinates substrate; that stretch reads HS.

Belongs to the myo-inositol oxygenase family. Fe cation serves as cofactor.

The protein localises to the cytoplasm. It carries out the reaction myo-inositol + O2 = D-glucuronate + H2O + H(+). Its pathway is polyol metabolism; myo-inositol degradation into D-glucuronate; D-glucuronate from myo-inositol: step 1/1. In terms of biological role, involved in the biosynthesis of UDP-glucuronic acid (UDP-GlcA), providing nucleotide sugars for cell-wall polymers. May be also involved in plant ascorbate biosynthesis. The chain is Probable inositol oxygenase from Oryza sativa subsp. japonica (Rice).